An 84-amino-acid polypeptide reads, in one-letter code: Large ribosomal subunit protein bL27 (84 aa).

Residues 1–21 (MAHKKAGGSTRNGRDSNPKYL) form a disordered region.

Belongs to the bacterial ribosomal protein bL27 family.

The chain is Large ribosomal subunit protein bL27 from Francisella tularensis subsp. holarctica (strain FTNF002-00 / FTA).